The primary structure comprises 166 residues: METQRASLCLGRWSLWLLLLGLVVPSASAQALSYREAVLRAVDRLNEQSSEANLYRLLELDQPPKADEDPGTPKPVSFTVKETVCPRPTWRPPELCDFKENGRVKQCVGTVTLNPSNDPLDINCDEIQSVGRFRRLRKKTRKRLKKIGKVLKWIPPIVGSIPLGCG.

The signal sequence occupies residues 1–29 (METQRASLCLGRWSLWLLLLGLVVPSASA). Positions 30–129 (QALSYREAVL…LDINCDEIQS (100 aa)) are excised as a propeptide. Disulfide bonds link Cys-85/Cys-96 and Cys-107/Cys-124.

This sequence belongs to the cathelicidin family.

The protein resides in the secreted. Functionally, exerts antimicrobial activity against both Gram-positive and negative bacteria. Its activity appears to be mediated by its ability to damage bacterial membranes. This Sus scrofa (Pig) protein is Antibacterial peptide PMAP-36 (PMAP36).